Consider the following 130-residue polypeptide: Capsid protein (130 aa).

Residues 32–105 (EWISSNSRSQ…FATNSDCELI (74 aa)) are viral RNA-binding.

This sequence belongs to the Leviviricetes capsid protein family. As to quaternary structure, homodimer. The capsid proteins form dimers that assemble by group of 5. Twelve such pentamers are linked together with free dimers. The homodimers binds to the viral RNA via an operator hairpin, but also to many other RNA sequences in the viral genome; this interaction probably shifts the virus from the replicative to the assembly phase and ensures specific encapsidation of the viral genome.

The protein resides in the virion. Its function is as follows. Capsid protein self-assembles to form an icosahedral capsid with a T=3 symmetry, about 26 nm in diameter, and consisting of 89 capsid proteins dimers (178 capsid proteins). Involved in viral genome encapsidation through the interaction between a capsid protein dimer and the multiple packaging signals present in the RNA genome. The capsid also contains 1 copy of the A2 maturation protein. In terms of biological role, acts as a translational repressor of viral replicase synthesis late in infection. This latter function is the result of capsid protein interaction with an RNA hairpin which contains the replicase ribosome-binding site. This chain is Capsid protein, found in Escherichia coli (Bacteriophage MS2).